The primary structure comprises 159 residues: Ribosomal RNA large subunit methyltransferase H (159 aa).

S-adenosyl-L-methionine-binding positions include leucine 76, glycine 108, and 127-132; that span reads FGLLTL.

Belongs to the RNA methyltransferase RlmH family. Homodimer.

The protein localises to the cytoplasm. It carries out the reaction pseudouridine(1915) in 23S rRNA + S-adenosyl-L-methionine = N(3)-methylpseudouridine(1915) in 23S rRNA + S-adenosyl-L-homocysteine + H(+). Specifically methylates the pseudouridine at position 1915 (m3Psi1915) in 23S rRNA. This chain is Ribosomal RNA large subunit methyltransferase H, found in Streptococcus pyogenes serotype M3 (strain SSI-1).